The chain runs to 210 residues: Floral homeotic protein FBP1 (210 aa).

One can recognise an MADS-box domain in the interval Arg-3–Phe-57. One can recognise a K-box domain in the interval His-82–Asn-173.

As to expression, petals.

The protein localises to the nucleus. Functionally, probable transcription factor. The polypeptide is Floral homeotic protein FBP1 (FBP1) (Petunia hybrida (Petunia)).